Reading from the N-terminus, the 242-residue chain is Proteasome subunit beta type-4 (242 aa).

Residues 1 to 23 constitute a propeptide that is removed on maturation; sequence ESVARGTAPGELHCFPGAGPVRH. T24 serves as the catalytic Nucleophile.

The protein belongs to the peptidase T1B family. In terms of assembly, the 26S proteasome consists of a 20S proteasome core and two 19S regulatory subunits. The 20S proteasome core is composed of 28 subunits that are arranged in four stacked rings, resulting in a barrel-shaped structure. The two end rings are each formed by seven alpha subunits, and the two central rings are each formed by seven beta subunits. The catalytic chamber with the active sites is on the inside of the barrel.

Its subcellular location is the cytoplasm. It localises to the nucleus. Functionally, non-catalytic component of the proteasome, a multicatalytic proteinase complex which is characterized by its ability to cleave peptides with Arg, Phe, Tyr, Leu, and Glu adjacent to the leaving group at neutral or slightly basic pH. The proteasome has an ATP-dependent proteolytic activity. The polypeptide is Proteasome subunit beta type-4 (psmb4) (Xenopus laevis (African clawed frog)).